Here is a 927-residue protein sequence, read N- to C-terminus: Small conductance calcium-activated potassium channel protein (927 aa).

Positions Met-1–Ser-31 are enriched in polar residues. Disordered regions lie at residues Met-1–Glu-131, Leu-181–Ala-251, and His-296–Thr-336. Low complexity predominate over residues Ser-45–Ser-62. Residues Val-63–Ala-77 are compositionally biased toward gly residues. Polar residues-rich tracts occupy residues Thr-95–His-107 and Asn-200–Pro-214. 2 stretches are compositionally biased toward low complexity: residues Ser-219–Ser-232 and His-296–Gln-308. Positions Ile-314 to Thr-336 are enriched in polar residues. The helical transmembrane segment at Ala-489–Ala-509 threads the bilayer. The helical transmembrane segment at Thr-530–Ile-550 threads the bilayer. A helical transmembrane segment spans residues Ile-569–Trp-589. Residues Val-609–His-629 form a helical membrane-spanning segment. The chain crosses the membrane as a helical span at residues Leu-658–Ala-678. An intramembrane region (pore-forming) is located at residues Leu-696–Val-716. Residues Gly-724–Val-744 form a helical membrane-spanning segment. The calmodulin-binding stretch occupies residues Asp-763–Thr-839.

The protein belongs to the potassium channel KCNN family. SK subfamily. Heterooligomer. The complex is composed of 4 channel subunits each of which binds to a calmodulin subunit which regulates the channel activity through calcium-binding.

Its subcellular location is the membrane. In terms of biological role, forms a voltage-independent potassium channel activated by intracellular calcium. Activation is followed by membrane hyperpolarization. Thought to regulate neuronal excitability by contributing to the slow component of synaptic afterhyperpolarization. The channel is blocked by apamin. This chain is Small conductance calcium-activated potassium channel protein, found in Drosophila melanogaster (Fruit fly).